Reading from the N-terminus, the 98-residue chain is NADH-ubiquinone oxidoreductase chain 4L (98 aa).

Helical transmembrane passes span methionine 1–phenylalanine 21, alanine 29–leucine 49, and alanine 59–valine 79.

Belongs to the complex I subunit 4L family.

Its subcellular location is the mitochondrion membrane. The catalysed reaction is a ubiquinone + NADH + 5 H(+)(in) = a ubiquinol + NAD(+) + 4 H(+)(out). Core subunit of the mitochondrial membrane respiratory chain NADH dehydrogenase (Complex I) which catalyzes electron transfer from NADH through the respiratory chain, using ubiquinone as an electron acceptor. Part of the enzyme membrane arm which is embedded in the lipid bilayer and involved in proton translocation. This Carassius auratus (Goldfish) protein is NADH-ubiquinone oxidoreductase chain 4L (MT-ND4L).